Consider the following 163-residue polypeptide: MRAVIQKTVGAKVDVVSEAGTETCGKIDGGFVVLLGVTHSDTEKDARYIADKIAHLRVFEDEAGKLNLSLKDVGGAVLLVSQFTLYADAASGRRPSFSQAAPAEQAQQLYLRTAELLRGHGIHVETGRFRTHMQVSLCNDGPVTILLDSFMTRISPKMKVVPD.

Positions 141-142 (GP) match the Gly-cisPro motif, important for rejection of L-amino acids motif.

It belongs to the DTD family. In terms of assembly, homodimer.

The protein resides in the cytoplasm. The enzyme catalyses glycyl-tRNA(Ala) + H2O = tRNA(Ala) + glycine + H(+). It catalyses the reaction a D-aminoacyl-tRNA + H2O = a tRNA + a D-alpha-amino acid + H(+). An aminoacyl-tRNA editing enzyme that deacylates mischarged D-aminoacyl-tRNAs. Also deacylates mischarged glycyl-tRNA(Ala), protecting cells against glycine mischarging by AlaRS. Acts via tRNA-based rather than protein-based catalysis; rejects L-amino acids rather than detecting D-amino acids in the active site. By recycling D-aminoacyl-tRNA to D-amino acids and free tRNA molecules, this enzyme counteracts the toxicity associated with the formation of D-aminoacyl-tRNA entities in vivo and helps enforce protein L-homochirality. In Neisseria meningitidis serogroup B (strain ATCC BAA-335 / MC58), this protein is D-aminoacyl-tRNA deacylase.